A 226-amino-acid chain; its full sequence is 6-deoxy-6-sulfo-D-fructose transaldolase (226 aa).

K89 (schiff-base intermediate with substrate) is an active-site residue.

The protein belongs to the transaldolase family.

The enzyme catalyses 6-deoxy-6-sulfo-D-fructose + D-glyceraldehyde 3-phosphate = D-fructose 6-phosphate + (2S)-3-sulfolactaldehyde. It carries out the reaction 6-deoxy-6-sulfo-D-fructose + D-erythrose 4-phosphate = (2S)-3-sulfolactaldehyde + D-sedoheptulose 7-phosphate. Functionally, part of the sulfo-TAL (or sulfo-SFT) pathway, a D-sulfoquinovose degradation pathway that produces sulfolactate (SL). Catalyzes the conversion of 6-deoxy-6-sulfo-D-fructose (SF) and glyceraldehyde 3-phosphate (GAP) into fructose-6-phosphate (F6P) and 3-sulfolactaldehyde (SLA). Can also catalyze the SF-cleavage with erythrose 4-phosphate (E4P) as acceptor, forming 3-sulfolactaldehyde (SLA) and sedoheptulose 7-phosphate (S7P). The protein is 6-deoxy-6-sulfo-D-fructose transaldolase of Priestia aryabhattai (Bacillus aryabhattai).